The sequence spans 417 residues: Tryptophan synthase beta chain (417 aa).

An N6-(pyridoxal phosphate)lysine modification is found at Lys99.

This sequence belongs to the TrpB family. As to quaternary structure, tetramer of two alpha and two beta chains. Requires pyridoxal 5'-phosphate as cofactor.

The enzyme catalyses (1S,2R)-1-C-(indol-3-yl)glycerol 3-phosphate + L-serine = D-glyceraldehyde 3-phosphate + L-tryptophan + H2O. Its pathway is amino-acid biosynthesis; L-tryptophan biosynthesis; L-tryptophan from chorismate: step 5/5. Its function is as follows. The beta subunit is responsible for the synthesis of L-tryptophan from indole and L-serine. In Corynebacterium glutamicum (strain R), this protein is Tryptophan synthase beta chain.